Reading from the N-terminus, the 1091-residue chain is Neural cell adhesion molecule 1 (1091 aa).

Positions methionine 1–serine 19 are cleaved as a signal peptide. Ig-like C2-type domains lie at leucine 20–lysine 113, glutamine 116–glutamine 205, proline 212–histidine 301, proline 308–glutamine 403, and proline 406–valine 495. Over leucine 20 to threonine 711 the chain is Extracellular. Intrachain disulfides connect cysteine 41-cysteine 96 and cysteine 139-cysteine 189. Heparin-binding positions include lysine 152–arginine 156 and lysine 161–arginine 165. Asparagine 222 carries N-linked (GlcNAc...) asparagine glycosylation. Cysteine 235 and cysteine 287 form a disulfide bridge. Residues asparagine 315, asparagine 347, asparagine 423, asparagine 449, and asparagine 478 are each glycosylated (N-linked (GlcNAc...) asparagine). Cysteine 329 and cysteine 385 are oxidised to a cystine. The cysteines at positions 426 and 479 are disulfide-linked. 2 consecutive Fibronectin type-III domains span residues threonine 499–valine 598 and glutamate 600–proline 696. The helical transmembrane segment at alanine 712 to valine 729 threads the bilayer. The Cytoplasmic segment spans residues aspartate 730–lysine 1091. 4 disordered regions span residues glycine 756–glutamate 809, alanine 840–serine 916, glutamate 937–lysine 1023, and threonine 1041–lysine 1091. Residues lysine 758 to proline 799 are compositionally biased toward basic and acidic residues. Over residues serine 845–serine 856 the composition is skewed to low complexity. Polar residues-rich tracts occupy residues aspartate 904–serine 916 and glutamine 980–asparagine 1012. Basic and acidic residues-rich tracts occupy residues glutamate 1013–lysine 1023 and lysine 1068–lysine 1091.

Polysialylated by ST8SIA2 and ST8SIA4. Polysialylation modulates cell interactions by confering both attractive and repulsive properties that are highly regulated by ST8SIA2 and ST8SIA4. Polysialylation is formed on a-2,3-linked sialic acid of core glycans.

Its subcellular location is the cell membrane. This protein is a cell adhesion molecule involved in neuron-neuron adhesion, neurite fasciculation, outgrowth of neurites, etc. This Gallus gallus (Chicken) protein is Neural cell adhesion molecule 1.